The primary structure comprises 343 residues: Probable dual-specificity RNA methyltransferase RlmN (343 aa).

Catalysis depends on E90, which acts as the Proton acceptor. The Radical SAM core domain maps to 96 to 325 (HEGYATACIS…AEIRYEKGAD (230 aa)). The cysteines at positions 103 and 330 are disulfide-linked. Positions 110, 114, and 117 each coordinate [4Fe-4S] cluster. S-adenosyl-L-methionine is bound by residues 157-158 (GE), S189, 212-214 (SLH), and N288. C330 functions as the S-methylcysteine intermediate in the catalytic mechanism.

Belongs to the radical SAM superfamily. RlmN family. Requires [4Fe-4S] cluster as cofactor.

The protein localises to the cytoplasm. The catalysed reaction is adenosine(2503) in 23S rRNA + 2 reduced [2Fe-2S]-[ferredoxin] + 2 S-adenosyl-L-methionine = 2-methyladenosine(2503) in 23S rRNA + 5'-deoxyadenosine + L-methionine + 2 oxidized [2Fe-2S]-[ferredoxin] + S-adenosyl-L-homocysteine. The enzyme catalyses adenosine(37) in tRNA + 2 reduced [2Fe-2S]-[ferredoxin] + 2 S-adenosyl-L-methionine = 2-methyladenosine(37) in tRNA + 5'-deoxyadenosine + L-methionine + 2 oxidized [2Fe-2S]-[ferredoxin] + S-adenosyl-L-homocysteine. Functionally, specifically methylates position 2 of adenine 2503 in 23S rRNA and position 2 of adenine 37 in tRNAs. The protein is Probable dual-specificity RNA methyltransferase RlmN of Pseudothermotoga lettingae (strain ATCC BAA-301 / DSM 14385 / NBRC 107922 / TMO) (Thermotoga lettingae).